The following is a 252-amino-acid chain: Zinc finger CCCH domain-containing protein 28 (252 aa).

Positions 1 to 21 (MSHRRDYGSDAVHVRITHDPP) are enriched in basic and acidic residues. The interval 1–31 (MSHRRDYGSDAVHVRITHDPPPENCFPNSGD) is disordered. 2 consecutive C3H1-type zinc fingers follow at residues 71 to 99 (FFKT…HSAE) and 143 to 171 (NWKT…HGPS).

This Arabidopsis thaliana (Mouse-ear cress) protein is Zinc finger CCCH domain-containing protein 28.